We begin with the raw amino-acid sequence, 568 residues long: Periplasmic trehalase (568 aa).

The N-terminal stretch at 1–39 is a signal peptide; that stretch reads MPHVVARSGDVMSSAAPPSCTSLLGLSLSMFVAPCTLTA. Residues Arg169, 176-177, Asn213, 222-224, 294-296, and Gly327 each bind substrate; these read WD, RSQ, and RPE. Active-site proton donor/acceptor residues include Asp329 and Glu511. Glu526 provides a ligand contact to substrate.

This sequence belongs to the glycosyl hydrolase 37 family.

It is found in the periplasm. It carries out the reaction alpha,alpha-trehalose + H2O = alpha-D-glucose + beta-D-glucose. Functionally, provides the cells with the ability to utilize trehalose at high osmolarity by splitting it into glucose molecules that can subsequently be taken up by the phosphotransferase-mediated uptake system. This chain is Periplasmic trehalase, found in Xanthomonas oryzae pv. oryzae (strain MAFF 311018).